Here is an 897-residue protein sequence, read N- to C-terminus: DNA endonuclease RBBP8 (897 aa).

Residues 22 to 45 (DLWTKLKECHDREVQGLQVKVTKL) are essential for binding to the MRN complex and for RPA focus formation on DNA damage. Residues 35-84 (VQGLQVKVTKLKQERILDAQRLEEFFTKNQQLREQQKVLHETIKVLEDRL) adopt a coiled-coil conformation. Positions 45 to 160 (LKQERILDAQ…AELECEEDVI (116 aa)) are required for interaction with LMO4, probably by stabilizing the interaction through RPPB8 dimerization. Residues Lys62 and Lys115 each participate in a glycyl lysine isopeptide (Lys-Gly) (interchain with G-Cter in SUMO2) cross-link. Residues 117 to 138 (ITELMNERNTLQEENKKLSEQL) are a coiled coil. Lys193 participates in a covalent cross-link: Glycyl lysine isopeptide (Lys-Gly) (interchain with G-Cter in SUMO2). 2 positions are modified to phosphoserine: Ser233 and Ser276. Residues 292 to 307 (KQPFEESTRNTEDSLR) are compositionally biased toward basic and acidic residues. The segment at 292–325 (KQPFEESTRNTEDSLRFSDSTSKTPPQEELPTRV) is disordered. Phosphothreonine; by CDK2 is present on Thr315. 3 positions are modified to phosphoserine: Ser326, Ser327, and Ser349. Residues Lys360 and Lys378 each participate in a glycyl lysine isopeptide (Lys-Gly) (interchain with G-Cter in SUMO2) cross-link. Position 379 is a phosphoserine (Ser379). Residues Lys396, Lys404, and Lys410 each participate in a glycyl lysine isopeptide (Lys-Gly) (interchain with G-Cter in SUMO2) cross-link. The tract at residues 419 to 464 (QNRTEYGKDSNTDKHLEPLKSLGGRTSKRKKTEEESEHEVSCPQAS) is disordered. Basic and acidic residues predominate over residues 420–436 (NRTEYGKDSNTDKHLEP). Glycyl lysine isopeptide (Lys-Gly) (interchain with G-Cter in SUMO2) cross-links involve residues Lys438 and Lys449. A PXDLS motif motif is present at residues 490-494 (PLDLS). The interval 509-557 (SETSKNKFRQVTLYEALKTIPKGFSSSRKASDGNCTLPKDSPGEPCSQE) is damage-recruitment motif. Lys526 is covalently cross-linked (Glycyl lysine isopeptide (Lys-Gly) (interchain with G-Cter in SUMO2); alternate). Glycyl lysine isopeptide (Lys-Gly) (interchain with G-Cter in SUMO2) cross-links involve residues Lys530, Lys572, and Lys578. A Glycyl lysine isopeptide (Lys-Gly) (interchain with G-Cter in SUMO2); alternate cross-link involves residue Lys604. Glycyl lysine isopeptide (Lys-Gly) (interchain with G-Cter in SUMO2) cross-links involve residues Lys613, Lys638, and Lys640. Residues 641 to 685 (SLQNNQDVSFENIQWSIDPGADLSQYKMDVTVIDTKDGSQSKLGG) form a required for interaction with LMO4, probably by making physical contact with LMO4 region. Ser664 is modified (phosphoserine; by ATM). Residue Lys676 forms a Glycyl lysine isopeptide (Lys-Gly) (interchain with G-Cter in SUMO2) linkage. Phosphoserine is present on Ser679. A disordered region spans residues 704–723 (KKQEQKGEKSSNEERKMNDS). A Glycyl lysine isopeptide (Lys-Gly) (interchain with G-Cter in SUMO2) cross-link involves residue Lys719. Ser723 carries the phosphoserine modification. Ser745 carries the phosphoserine; by ATM modification. A Glycyl lysine isopeptide (Lys-Gly) (interchain with G-Cter in SUMO2) cross-link involves residue Lys782. Residues 840 to 842 (FRY) carry the KLHL15-binding motif. Residue Thr847 is modified to Phosphothreonine; by CDK1. Residue Thr859 is modified to Phosphothreonine; by ATR. Lys869 is covalently cross-linked (Glycyl lysine isopeptide (Lys-Gly) (interchain with G-Cter in SUMO2)). The tract at residues 873 to 897 (DPCPRPKRRQPYNAIFSPKGKEQKT) is disordered.

Belongs to the COM1/SAE2/CtIP family. In terms of assembly, homotetramer; formed by antiparallel association of helical extensions protruding from the N-termini of two parallel coiled-coil dimers. Forms a dumbbell-shaped particle in which polar globular domains are held about 30 nm apart by a central rod. Homotetramerization is required for DNA-end resection and repair. Interacts (via the PXDLS motif) with CTBP1; the interaction is disrupted via binding of the adenovirus E1A to CTBP1. Component of the BRCA1-RBBP8 complex. Interacts (the Ser-327 phosphorylated form) with BRCA1 (via the C-terminal BRCT domains): the interaction occurs in the G2 phase, ubiquitinates RBBP8 and involves RBBP8 in BRCA1-dependent G2/M checkpoint control on DNA damage. Interacts with RB1. Interacts with the MRN complex; interacts directly with MRE11; the interaction is required for efficient homologous recombination (HR) and regulation of the MRN complex. Interacts directly with RAD50. Interacts (when phosphorylated by CDK1) with NBN; promoting association with the MRN complex. Interacts with LM04 (via the LIM zinc-binding 1 domain). Interacts with SIAH1. Interacts with RNF138. Interacts with EXD2. Interacts with CUL3 and KLHL15; this interaction leads to RBBP8 proteasomal degradation. Directly interacts with PIN1; this interaction depends upon RBBP8 phosphorylation, predominantly at Thr-315. Interacts with FZR1; this interaction leads to APC/C-mediated RBBP8 proteasomal degradation. Interacts with AUNIP; leading to recruitment of RBBP8 to sites of DNA damage. Interacts with SAMHD1. Interacts with HDGFL2. Hyperphosphorylation upon ionizing radiation results in dissociation from BRCA1. Phosphorylation at Thr-847 by CDK1 is essential for the recruitment to DNA and the DNA repair function. Phosphorylation at Thr-847 and Thr-859 promote interaction with NBN and recruitment to double-strand breaks (DSBs). Phosphorylated on Ser-327 as cells enter G2 phase. This phosphorylation is required for binding BRCA1 and for the G2/M DNA damage transition checkpoint control. Phosphorylation at Thr-315, probably catalyzed by CDK2, is required for PIN1-binding, while phosphorylation at Ser-276 serves as a PIN1 isomerization site. Phosphorylation at Thr-315 is cell-cycle dependent. It steadily increases during S phase, peaks at late S/G2 phase, and drops at G1. Phosphorylation is not required for tetramerization. Binds to DNA more strongly when dephosphorylated. In terms of processing, ubiquitinated. Ubiquitination at multiple sites by BRCA1 (via its N-terminal RING domain) does not lead to its proteasomal degradation but instead the ubiquitinated RBBP8 binds to chromatin following DNA damage and may play a role in G2/M checkpoint control. Ubiquitinated by RNF138 at its N-terminus. Ubiquitinated through 'Lys-48' by the E3 CUL3-KLHL15 complex; this modification leads to proteasomal degradation. Ubiquitinated by the E3 FZR1/APC/C complex; this modification leads to proteasomal degradation. As to expression, expressed in ER-positive breast cancer lines, but tends to be down-regulated ER-negative cells (at protein level).

Its subcellular location is the nucleus. The protein resides in the chromosome. Functionally, endonuclease that cooperates with the MRE11-RAD50-NBN (MRN) complex in DNA-end resection, the first step of double-strand break (DSB) repair through the homologous recombination (HR) pathway. HR is restricted to S and G2 phases of the cell cycle and preferentially repairs DSBs resulting from replication fork collapse. Key determinant of DSB repair pathway choice, as it commits cells to HR by preventing classical non-homologous end-joining (NHEJ). Specifically promotes the endonuclease activity of the MRN complex to clear DNA ends containing protein adducts: recruited to DSBs by NBN following phosphorylation by CDK1, and promotes the endonuclease activity of MRE11 to clear protein-DNA adducts and generate clean double-strand break ends. Functions downstream of the MRN complex and ATM, promotes ATR activation and its recruitment to DSBs in the S/G2 phase facilitating the generation of ssDNA. Component of the BRCA1-RBBP8 complex that regulates CHEK1 activation and controls cell cycle G2/M checkpoints on DNA damage. During immunoglobulin heavy chain class-switch recombination, promotes microhomology-mediated alternative end joining (A-NHEJ) and plays an essential role in chromosomal translocations. Binds preferentially to DNA Y-junctions and to DNA substrates with blocked ends and promotes intermolecular DNA bridging. This is DNA endonuclease RBBP8 (RBBP8) from Homo sapiens (Human).